The chain runs to 177 residues: Adenine phosphoribosyltransferase (177 aa).

The protein belongs to the purine/pyrimidine phosphoribosyltransferase family. As to quaternary structure, homodimer.

The protein localises to the cytoplasm. It carries out the reaction AMP + diphosphate = 5-phospho-alpha-D-ribose 1-diphosphate + adenine. It functions in the pathway purine metabolism; AMP biosynthesis via salvage pathway; AMP from adenine: step 1/1. Catalyzes a salvage reaction resulting in the formation of AMP, that is energically less costly than de novo synthesis. In Leuconostoc citreum (strain KM20), this protein is Adenine phosphoribosyltransferase.